Reading from the N-terminus, the 73-residue chain is UPF0235 protein SYO3AOP1_0257 (73 aa).

Belongs to the UPF0235 family.

In Sulfurihydrogenibium sp. (strain YO3AOP1), this protein is UPF0235 protein SYO3AOP1_0257.